A 662-amino-acid chain; its full sequence is UvrABC system protein B (662 aa).

Residues 25 to 182 enclose the Helicase ATP-binding domain; it reads KGIEKREKFQ…KKLVEIQYER (158 aa). An ATP-binding site is contributed by 38-45; sequence GVTGSGKT. The short motif at 91-114 is the Beta-hairpin element; the sequence is YYDYYQPEAYVAQSDTYIEKDASI. A Helicase C-terminal domain is found at 429–595; that stretch reads QIDDLYTSIQ…TIIKDIREVI (167 aa). A UVR domain is found at 622 to 657; that stretch reads DKLIEKYEEEMKEAAQNLQFEKAAHLRDVIYKLKKD.

Belongs to the UvrB family. In terms of assembly, forms a heterotetramer with UvrA during the search for lesions. Interacts with UvrC in an incision complex.

The protein localises to the cytoplasm. The UvrABC repair system catalyzes the recognition and processing of DNA lesions. A damage recognition complex composed of 2 UvrA and 2 UvrB subunits scans DNA for abnormalities. Upon binding of the UvrA(2)B(2) complex to a putative damaged site, the DNA wraps around one UvrB monomer. DNA wrap is dependent on ATP binding by UvrB and probably causes local melting of the DNA helix, facilitating insertion of UvrB beta-hairpin between the DNA strands. Then UvrB probes one DNA strand for the presence of a lesion. If a lesion is found the UvrA subunits dissociate and the UvrB-DNA preincision complex is formed. This complex is subsequently bound by UvrC and the second UvrB is released. If no lesion is found, the DNA wraps around the other UvrB subunit that will check the other stand for damage. In Clostridium botulinum (strain Langeland / NCTC 10281 / Type F), this protein is UvrABC system protein B.